We begin with the raw amino-acid sequence, 128 residues long: uncharacterized protein (128 aa).

Basic and acidic residues predominate over residues 1 to 11 (MDNKKKEENPS). Residues 1-40 (MDNKKKEENPSKSDTSISLPPSSTGEALQNYTESEWNASD) form a disordered region. The span at 12 to 37 (KSDTSISLPPSSTGEALQNYTESEWN) shows a compositional bias: polar residues.

This is an uncharacterized protein from Caenorhabditis elegans.